A 101-amino-acid polypeptide reads, in one-letter code: Small ribosomal subunit protein uS14 (101 aa).

The protein belongs to the universal ribosomal protein uS14 family. In terms of assembly, part of the 30S ribosomal subunit. Contacts proteins S3 and S10.

Functionally, binds 16S rRNA, required for the assembly of 30S particles and may also be responsible for determining the conformation of the 16S rRNA at the A site. In Saccharophagus degradans (strain 2-40 / ATCC 43961 / DSM 17024), this protein is Small ribosomal subunit protein uS14.